We begin with the raw amino-acid sequence, 257 residues long: Glycerol-3-phosphate acyltransferase (257 aa).

Helical transmembrane passes span 7–27 (IVMA…LIGS), 66–86 (ILTL…TYII), 104–124 (AILV…PIFF), 140–160 (ITVD…ILLI), 164–184 (MSLS…VPGI), and 203–223 (YVIK…SLLI).

This sequence belongs to the PlsY family. As to quaternary structure, probably interacts with PlsX.

It localises to the cell membrane. It catalyses the reaction an acyl phosphate + sn-glycerol 3-phosphate = a 1-acyl-sn-glycero-3-phosphate + phosphate. It participates in lipid metabolism; phospholipid metabolism. Catalyzes the transfer of an acyl group from acyl-phosphate (acyl-PO(4)) to glycerol-3-phosphate (G3P) to form lysophosphatidic acid (LPA). This enzyme utilizes acyl-phosphate as fatty acyl donor, but not acyl-CoA or acyl-ACP. This chain is Glycerol-3-phosphate acyltransferase, found in Ureaplasma parvum serovar 3 (strain ATCC 700970).